Reading from the N-terminus, the 1020-residue chain is Fanconi-associated nuclease 1 (1020 aa).

The span at 1-11 (MPSQRKSPDQK) shows a compositional bias: basic and acidic residues. Residues 1-24 (MPSQRKSPDQKRPRRSLSTSKTAK) form a disordered region. The D-box signature appears at 14–22 (RRSLSTSKT). A UBZ4-type zinc finger spans residues 41–69 (KLACSTCHKMVPRYDLIRHLDESCANNGV). Residues Cys44, Cys47, His59, and Cys64 each contribute to the Zn(2+) site. A disordered region spans residues 173–208 (KNEGLASQCPQTSPSTPGTSLTDNCPEMEDKDEVLN). A compositionally biased stretch (polar residues) spans 180–195 (QCPQTSPSTPGTSLTD). Residues 212-214 (KEN) carry the KEN box motif. Residues 224 to 242 (ENASEQKVKNNKITGDESQ) show a composition bias toward basic and acidic residues. 2 disordered regions span residues 224-252 (ENAS…PALT) and 269-288 (LVSN…ESAR). Residues 269-278 (LVSNTKSSPG) show a composition bias toward polar residues. A coiled-coil region spans residues 673–737 (SSRAVEVLER…AIRCIREGLA (65 aa)). Residues Glu837, Asp963, Glu978, and Val979 each contribute to the Mn(2+) site. The 113-residue stretch at 898–1010 (AESLRAWVGE…GADVEVCHVV (113 aa)) folds into the VRR-NUC domain.

It belongs to the FAN1 family. As to quaternary structure, interacts with FANCD2 (when monoubiquitinated). Interacts with FANCI, MLH1, MLH3 and PMS2. It depends on Mn(2+) as a cofactor. The cofactor is Mg(2+). Ubiquitinated and degraded during mitotic exit by the APC/C-Cdh1 complex.

It is found in the nucleus. The catalysed reaction is Hydrolytically removes 5'-nucleotides successively from the 3'-hydroxy termini of 3'-hydroxy-terminated oligonucleotides.. Nuclease required for the repair of DNA interstrand cross-links (ICL) recruited at sites of DNA damage by monoubiquitinated FANCD2. Specifically involved in repair of ICL-induced DNA breaks by being required for efficient homologous recombination, probably in the resolution of homologous recombination intermediates. Not involved in DNA double-strand breaks resection. Acts as a 5'-3' exonuclease that anchors at a cut end of DNA and cleaves DNA successively at every third nucleotide, allowing to excise an ICL from one strand through flanking incisions. Probably keeps excising with 3'-flap annealing until it reaches and unhooks the ICL. Acts at sites that have a 5'-terminal phosphate anchor at a nick or a 1- or 2-nucleotide flap and is augmented by a 3' flap. Also has endonuclease activity toward 5'-flaps. This chain is Fanconi-associated nuclease 1, found in Mus musculus (Mouse).